We begin with the raw amino-acid sequence, 158 residues long: SsrA-binding protein (158 aa).

The tract at residues 131–158 is disordered; the sequence is GKKTHDKRETEKKRDWNREKARLLRDRG. Residues 136–158 are compositionally biased toward basic and acidic residues; it reads DKRETEKKRDWNREKARLLRDRG.

The protein belongs to the SmpB family.

The protein localises to the cytoplasm. Its function is as follows. Required for rescue of stalled ribosomes mediated by trans-translation. Binds to transfer-messenger RNA (tmRNA), required for stable association of tmRNA with ribosomes. tmRNA and SmpB together mimic tRNA shape, replacing the anticodon stem-loop with SmpB. tmRNA is encoded by the ssrA gene; the 2 termini fold to resemble tRNA(Ala) and it encodes a 'tag peptide', a short internal open reading frame. During trans-translation Ala-aminoacylated tmRNA acts like a tRNA, entering the A-site of stalled ribosomes, displacing the stalled mRNA. The ribosome then switches to translate the ORF on the tmRNA; the nascent peptide is terminated with the 'tag peptide' encoded by the tmRNA and targeted for degradation. The ribosome is freed to recommence translation, which seems to be the essential function of trans-translation. This is SsrA-binding protein from Brucella ovis (strain ATCC 25840 / 63/290 / NCTC 10512).